A 261-amino-acid polypeptide reads, in one-letter code: Pantothenate synthetase (261 aa).

An ATP-binding site is contributed by 29-36 (MGALHNGH). H36 (proton donor) is an active-site residue. Q60 serves as a coordination point for (R)-pantoate. Q60 is a beta-alanine binding site. 147-150 (GEKD) contacts ATP. Q153 contacts (R)-pantoate. Residue 184–187 (LSSR) participates in ATP binding.

Belongs to the pantothenate synthetase family. In terms of assembly, homodimer.

The protein resides in the cytoplasm. It catalyses the reaction (R)-pantoate + beta-alanine + ATP = (R)-pantothenate + AMP + diphosphate + H(+). It functions in the pathway cofactor biosynthesis; (R)-pantothenate biosynthesis; (R)-pantothenate from (R)-pantoate and beta-alanine: step 1/1. Its function is as follows. Catalyzes the condensation of pantoate with beta-alanine in an ATP-dependent reaction via a pantoyl-adenylate intermediate. In Francisella tularensis subsp. holarctica (strain FTNF002-00 / FTA), this protein is Pantothenate synthetase.